A 611-amino-acid chain; its full sequence is Probable potassium transport system protein Kup 1 (611 aa).

Transmembrane regions (helical) follow at residues 6-26 (LMVGALGVVYGDIGTSPLYTM), 44-64 (MLSLIVWTLLITTSIKYVAVV), 90-110 (LGVIAMGLIGAALLYGDGAIT), 129-149 (ISPYIVTLSAIILVGLFALQA), 158-178 (LFGPVMIAWFIVIGILGLFGI), 193-213 (GLSYLFSHGMTGFLVLGAVFL), 237-257 (WYGLVLPCLILNYAGQTAVVV), 280-300 (LVALATVATIIASQAIISGAF), 328-348 (IYIGFVNWTLMALTLGLTLGF), 354-374 (LAAAFGIAVSLTMLLTSILMF), 385-405 (LAASLLTAGLFVVVDMSFVSA), and 410-430 (VLEGGWFPLVVAAVIFFLMMT).

The protein belongs to the HAK/KUP transporter (TC 2.A.72) family.

Its subcellular location is the cell inner membrane. It catalyses the reaction K(+)(in) + H(+)(in) = K(+)(out) + H(+)(out). Functionally, transport of potassium into the cell. Likely operates as a K(+):H(+) symporter. This Bradyrhizobium sp. (strain BTAi1 / ATCC BAA-1182) protein is Probable potassium transport system protein Kup 1.